A 315-amino-acid polypeptide reads, in one-letter code: Ribosomal protein L11 methyltransferase (315 aa).

Residues threonine 162, glycine 183, aspartate 205, and asparagine 248 each contribute to the S-adenosyl-L-methionine site.

The protein belongs to the methyltransferase superfamily. PrmA family.

Its subcellular location is the cytoplasm. It carries out the reaction L-lysyl-[protein] + 3 S-adenosyl-L-methionine = N(6),N(6),N(6)-trimethyl-L-lysyl-[protein] + 3 S-adenosyl-L-homocysteine + 3 H(+). In terms of biological role, methylates ribosomal protein L11. The protein is Ribosomal protein L11 methyltransferase of Enterococcus faecalis (strain ATCC 700802 / V583).